The chain runs to 132 residues: ATP synthase epsilon chain, chloroplastic (132 aa).

Belongs to the ATPase epsilon chain family. As to quaternary structure, F-type ATPases have 2 components, CF(1) - the catalytic core - and CF(0) - the membrane proton channel. CF(1) has five subunits: alpha(3), beta(3), gamma(1), delta(1), epsilon(1). CF(0) has three main subunits: a, b and c.

The protein resides in the plastid. It is found in the chloroplast thylakoid membrane. Produces ATP from ADP in the presence of a proton gradient across the membrane. The polypeptide is ATP synthase epsilon chain, chloroplastic (Coffea arabica (Arabian coffee)).